The sequence spans 103 residues: Large ribosomal subunit protein bL21 (103 aa).

The protein belongs to the bacterial ribosomal protein bL21 family. Part of the 50S ribosomal subunit. Contacts protein L20.

In terms of biological role, this protein binds to 23S rRNA in the presence of protein L20. The protein is Large ribosomal subunit protein bL21 of Shewanella loihica (strain ATCC BAA-1088 / PV-4).